We begin with the raw amino-acid sequence, 150 residues long: Putative pre-16S rRNA nuclease (150 aa).

It belongs to the YqgF nuclease family.

Its subcellular location is the cytoplasm. In terms of biological role, could be a nuclease involved in processing of the 5'-end of pre-16S rRNA. The polypeptide is Putative pre-16S rRNA nuclease (Chlamydia felis (strain Fe/C-56) (Chlamydophila felis)).